A 491-amino-acid polypeptide reads, in one-letter code: Acetyl-coenzyme A carboxylase carboxyl transferase subunit beta, chloroplastic (491 aa).

A CoA carboxyltransferase N-terminal domain is found at 229-491; the sequence is LWVQCENCYG…FQLHGFFPLT (263 aa). Zn(2+) contacts are provided by cysteine 233, cysteine 236, cysteine 252, and cysteine 255. The C4-type zinc-finger motif lies at 233 to 255; that stretch reads CENCYGLNYKQFFRSRLNICEHC.

It belongs to the AccD/PCCB family. As to quaternary structure, acetyl-CoA carboxylase is a heterohexamer composed of biotin carboxyl carrier protein, biotin carboxylase and 2 subunits each of ACCase subunit alpha and ACCase plastid-coded subunit beta (accD). It depends on Zn(2+) as a cofactor.

Its subcellular location is the plastid. The protein resides in the chloroplast stroma. It carries out the reaction N(6)-carboxybiotinyl-L-lysyl-[protein] + acetyl-CoA = N(6)-biotinyl-L-lysyl-[protein] + malonyl-CoA. It participates in lipid metabolism; malonyl-CoA biosynthesis; malonyl-CoA from acetyl-CoA: step 1/1. In terms of biological role, component of the acetyl coenzyme A carboxylase (ACC) complex. Biotin carboxylase (BC) catalyzes the carboxylation of biotin on its carrier protein (BCCP) and then the CO(2) group is transferred by the transcarboxylase to acetyl-CoA to form malonyl-CoA. This Lemna minor (Common duckweed) protein is Acetyl-coenzyme A carboxylase carboxyl transferase subunit beta, chloroplastic.